Here is a 160-residue protein sequence, read N- to C-terminus: Allophycocyanin alpha chain (160 aa).

Asn-70 is subject to N4-methylasparagine. Cys-80 provides a ligand contact to (2R,3E)-phycocyanobilin.

It belongs to the phycobiliprotein family. In terms of assembly, component of the phycobilisome. Heterodimer of an alpha and a beta chain. Contains one covalently linked phycocyanobilin chromophore.

It is found in the cellular thylakoid membrane. Functionally, light-harvesting photosynthetic bile pigment-protein from the phycobiliprotein complex. Allophycocyanin has a maximum absorption at approximately 650 nanometers. This Mastigocladus laminosus (Fischerella sp.) protein is Allophycocyanin alpha chain (apcA).